Consider the following 604-residue polypeptide: Sulfite reductase [NADPH] flavoprotein alpha-component (604 aa).

In terms of domain architecture, Flavodoxin-like spans 66 to 204 (VTVLSASQTG…AADGWTDNIA (139 aa)). FMN-binding positions include 72-77 (SQTGNA), 119-122 (STQG), and 155-164 (LGDSSYPNFC). Residues 239 to 453 (ADPFPAALLA…VERNDGFRLP (215 aa)) enclose the FAD-binding FR-type domain. FAD is bound by residues threonine 327, glutamine 361, 391–394 (RLYS), 409–411 (TVG), and 424–427 (GGAS). Residues 524 to 525 (SR), 530 to 534 (KIYVQ), and aspartate 566 each bind NADP(+). An FAD-binding site is contributed by tyrosine 604.

The protein belongs to the NADPH-dependent sulphite reductase flavoprotein subunit CysJ family. It in the N-terminal section; belongs to the flavodoxin family. In the C-terminal section; belongs to the flavoprotein pyridine nucleotide cytochrome reductase family. In terms of assembly, alpha(8)-beta(8). The alpha component is a flavoprotein, the beta component is a hemoprotein. Requires FAD as cofactor. FMN is required as a cofactor.

The catalysed reaction is hydrogen sulfide + 3 NADP(+) + 3 H2O = sulfite + 3 NADPH + 4 H(+). It participates in sulfur metabolism; hydrogen sulfide biosynthesis; hydrogen sulfide from sulfite (NADPH route): step 1/1. In terms of biological role, component of the sulfite reductase complex that catalyzes the 6-electron reduction of sulfite to sulfide. This is one of several activities required for the biosynthesis of L-cysteine from sulfate. The flavoprotein component catalyzes the electron flow from NADPH -&gt; FAD -&gt; FMN to the hemoprotein component. This is Sulfite reductase [NADPH] flavoprotein alpha-component from Neisseria meningitidis serogroup A / serotype 4A (strain DSM 15465 / Z2491).